A 322-amino-acid polypeptide reads, in one-letter code: GTP 3',8-cyclase (322 aa).

One can recognise a Radical SAM core domain in the interval 5–217 (SYGRVIDYLR…NIIAQKYSFK (213 aa)). Arg-14 is a GTP binding site. [4Fe-4S] cluster contacts are provided by Cys-21 and Cys-25. An S-adenosyl-L-methionine-binding site is contributed by Tyr-27. A [4Fe-4S] cluster-binding site is contributed by Cys-28. Position 64 (Arg-64) interacts with GTP. S-adenosyl-L-methionine is bound at residue Gly-68. Position 95 (Thr-95) interacts with GTP. Ser-119 contacts S-adenosyl-L-methionine. Residue Lys-155 participates in GTP binding. Residue Met-189 coordinates S-adenosyl-L-methionine. Residues Cys-249 and Cys-252 each contribute to the [4Fe-4S] cluster site. Residue 254–256 (RIR) coordinates GTP. Residue Cys-266 coordinates [4Fe-4S] cluster.

It belongs to the radical SAM superfamily. MoaA family. Monomer and homodimer. The cofactor is [4Fe-4S] cluster.

The enzyme catalyses GTP + AH2 + S-adenosyl-L-methionine = (8S)-3',8-cyclo-7,8-dihydroguanosine 5'-triphosphate + 5'-deoxyadenosine + L-methionine + A + H(+). It participates in cofactor biosynthesis; molybdopterin biosynthesis. Catalyzes the cyclization of GTP to (8S)-3',8-cyclo-7,8-dihydroguanosine 5'-triphosphate. In Campylobacter lari (strain RM2100 / D67 / ATCC BAA-1060), this protein is GTP 3',8-cyclase.